A 378-amino-acid chain; its full sequence is Branched-chain-amino-acid aminotransferase (378 aa).

Residue Lys-213 is modified to N6-(pyridoxal phosphate)lysine.

It belongs to the class-IV pyridoxal-phosphate-dependent aminotransferase family. Homodimer. Pyridoxal 5'-phosphate serves as cofactor.

The catalysed reaction is L-leucine + 2-oxoglutarate = 4-methyl-2-oxopentanoate + L-glutamate. It carries out the reaction L-isoleucine + 2-oxoglutarate = (S)-3-methyl-2-oxopentanoate + L-glutamate. It catalyses the reaction L-valine + 2-oxoglutarate = 3-methyl-2-oxobutanoate + L-glutamate. Catalyzes the first reaction in the catabolism of the essential branched chain amino acids leucine, isoleucine, and valine. The polypeptide is Branched-chain-amino-acid aminotransferase (bcaA) (Dictyostelium discoideum (Social amoeba)).